A 284-amino-acid chain; its full sequence is 4-hydroxybenzoate octaprenyltransferase (284 aa).

9 helical membrane-spanning segments follow: residues 19 to 39 (IPIL…SHGL), 42 to 62 (ISYL…GCII), 85 to 105 (GQLS…VAFI), 107 to 127 (VLFL…LAIL), 134 to 154 (FFAI…FMAF), 165 to 185 (AWIF…IYAL), 211 to 231 (ILLF…YCDF), 233 to 253 (SFFY…YFLY), and 261 to 281 (CINA…IAVI).

This sequence belongs to the UbiA prenyltransferase family. The cofactor is Mg(2+).

It localises to the cell inner membrane. The enzyme catalyses all-trans-octaprenyl diphosphate + 4-hydroxybenzoate = 4-hydroxy-3-(all-trans-octaprenyl)benzoate + diphosphate. It participates in cofactor biosynthesis; ubiquinone biosynthesis. In terms of biological role, catalyzes the prenylation of para-hydroxybenzoate (PHB) with an all-trans polyprenyl group. Mediates the second step in the final reaction sequence of ubiquinone-8 (UQ-8) biosynthesis, which is the condensation of the polyisoprenoid side chain with PHB, generating the first membrane-bound Q intermediate 3-octaprenyl-4-hydroxybenzoate. The polypeptide is 4-hydroxybenzoate octaprenyltransferase (Francisella tularensis subsp. holarctica (strain LVS)).